The primary structure comprises 57 residues: MAVPARHTSSAKKNRRRTHYKLTAPTVTFDETTGDYRHSHRVSLKGYYKGRKVRDTK.

Residues 1–23 (MAVPARHTSSAKKNRRRTHYKLT) form a disordered region. The span at 9–20 (SSAKKNRRRTHY) shows a compositional bias: basic residues.

The protein belongs to the bacterial ribosomal protein bL32 family.

This is Large ribosomal subunit protein bL32 from Lactococcus lactis subsp. cremoris (strain MG1363).